A 316-amino-acid polypeptide reads, in one-letter code: L-lactate dehydrogenase (316 aa).

Residues valine 15, aspartate 37, lysine 42, tyrosine 68, and 82–83 contribute to the NAD(+) site; that span reads GL. Residues glutamine 85, arginine 91, and 123 to 126 contribute to the substrate site; that span reads NPVD. Residues 121–123 and threonine 146 contribute to the NAD(+) site; that span reads ASN. Substrate is bound at residue 151 to 154; that stretch reads DTSR. Beta-D-fructose 1,6-bisphosphate-binding residues include arginine 156 and histidine 171. Histidine 178 acts as the Proton acceptor in catalysis. Residue tyrosine 222 is modified to Phosphotyrosine. Threonine 231 contacts substrate.

The protein belongs to the LDH/MDH superfamily. LDH family. In terms of assembly, homotetramer.

It localises to the cytoplasm. It carries out the reaction (S)-lactate + NAD(+) = pyruvate + NADH + H(+). It functions in the pathway fermentation; pyruvate fermentation to lactate; (S)-lactate from pyruvate: step 1/1. With respect to regulation, allosterically activated by fructose 1,6-bisphosphate (FBP). Catalyzes the conversion of lactate to pyruvate. The protein is L-lactate dehydrogenase of Borrelia hermsii (strain HS1 / DAH).